The chain runs to 172 residues: Ribosome maturation factor RimM (172 aa).

The PRC barrel domain occupies Glu-92 to Gly-167.

Belongs to the RimM family. As to quaternary structure, binds ribosomal protein uS19.

The protein resides in the cytoplasm. Functionally, an accessory protein needed during the final step in the assembly of 30S ribosomal subunit, possibly for assembly of the head region. Essential for efficient processing of 16S rRNA. May be needed both before and after RbfA during the maturation of 16S rRNA. It has affinity for free ribosomal 30S subunits but not for 70S ribosomes. This chain is Ribosome maturation factor RimM, found in Ehrlichia ruminantium (strain Gardel).